We begin with the raw amino-acid sequence, 252 residues long: Petrobactin import ATP-binding protein YclP (252 aa).

The region spanning 2–236 (VEVRNVSKQY…SVLEEIYDMT (235 aa)) is the ABC transporter domain. Position 34-41 (34-41 (GPNGAGKS)) interacts with ATP.

Belongs to the ABC transporter superfamily. In terms of assembly, the complex is composed of two ATP-binding proteins (YclP), two transmembrane proteins (YclN and YclO) and a solute-binding protein (YclQ).

Its subcellular location is the cell membrane. It carries out the reaction a Fe(III)-siderophore(out) + ATP + H2O = a Fe(III)-siderophore(in) + ADP + phosphate + H(+). Functionally, part of the ABC transporter complex YclNOPQ involved in uptake of ferric-petrobactin. Petrobactin is a photoreactive 3,4-catecholate siderophore produced by many members of the B.cereus group, including B.anthracis. Probably responsible for energy coupling to the transport system. The polypeptide is Petrobactin import ATP-binding protein YclP (yclP) (Bacillus subtilis (strain 168)).